The following is a 256-amino-acid chain: 5-keto-4-deoxy-D-glucarate aldolase (256 aa).

His-50 acts as the Proton acceptor in catalysis. Gln-151 is a substrate binding site. Residue Glu-153 coordinates Mg(2+). Substrate-binding residues include Ser-178 and Asp-179. Asp-179 lines the Mg(2+) pocket.

The protein belongs to the HpcH/HpaI aldolase family. KDGluc aldolase subfamily. Homohexamer; trimer of dimers. Mg(2+) serves as cofactor.

It catalyses the reaction 5-dehydro-4-deoxy-D-glucarate = 2-hydroxy-3-oxopropanoate + pyruvate. It carries out the reaction 2-dehydro-3-deoxy-D-glucarate = 2-hydroxy-3-oxopropanoate + pyruvate. It participates in carbohydrate acid metabolism; galactarate degradation; D-glycerate from galactarate: step 2/3. Functionally, catalyzes the reversible retro-aldol cleavage of both 5-keto-4-deoxy-D-glucarate and 2-keto-3-deoxy-D-glucarate to pyruvate and tartronic semialdehyde. The sequence is that of 5-keto-4-deoxy-D-glucarate aldolase from Escherichia coli O6:H1 (strain CFT073 / ATCC 700928 / UPEC).